A 334-amino-acid polypeptide reads, in one-letter code: RNA 3'-terminal phosphate cyclase (334 aa).

279 to 282 (HMGD) contributes to the ATP binding site. Residue H303 is the Tele-AMP-histidine intermediate of the active site.

This sequence belongs to the RNA 3'-terminal cyclase family. Type 1 subfamily.

Its subcellular location is the cytoplasm. It catalyses the reaction a 3'-end 3'-phospho-ribonucleotide-RNA + ATP = a 3'-end 2',3'-cyclophospho-ribonucleotide-RNA + AMP + diphosphate. Its function is as follows. Catalyzes the conversion of 3'-phosphate to a 2',3'-cyclic phosphodiester at the end of RNA. The mechanism of action of the enzyme occurs in 3 steps: (A) adenylation of the enzyme by ATP; (B) transfer of adenylate to an RNA-N3'P to produce RNA-N3'PP5'A; (C) and attack of the adjacent 2'-hydroxyl on the 3'-phosphorus in the diester linkage to produce the cyclic end product. The biological role of this enzyme is unknown but it is likely to function in some aspects of cellular RNA processing. This is RNA 3'-terminal phosphate cyclase from Metallosphaera sedula (strain ATCC 51363 / DSM 5348 / JCM 9185 / NBRC 15509 / TH2).